The following is a 362-amino-acid chain: Ribosomal RNA large subunit methyltransferase F (362 aa).

The span at 1-28 (MNTPLKPKHGQKTNRKPKANKPVVKKQQ) shows a compositional bias: basic residues. Residues 1-40 (MNTPLKPKHGQKTNRKPKANKPVVKKQQTKQPPTHKVQGE) are disordered.

Belongs to the methyltransferase superfamily. METTL16/RlmF family.

The protein localises to the cytoplasm. It carries out the reaction adenosine(1618) in 23S rRNA + S-adenosyl-L-methionine = N(6)-methyladenosine(1618) in 23S rRNA + S-adenosyl-L-homocysteine + H(+). Functionally, specifically methylates the adenine in position 1618 of 23S rRNA. The protein is Ribosomal RNA large subunit methyltransferase F of Vibrio cholerae serotype O1 (strain M66-2).